The following is a 383-amino-acid chain: F-box/kelch-repeat protein At1g16250 (383 aa).

Residues 7 to 54 (SIIPGLPDDLALRCIAKLSHGYHGVLECVSRGWRDLVRGADYSCYKAR) enclose the F-box domain. Kelch repeat units lie at residues 50–103 (CYKA…GFAC), 109–165 (CLLV…SVSG), 166–214 (KVYV…SYRG), 216–263 (FHVL…VMKN), and 318–377 (ELYV…CVSL).

This Arabidopsis thaliana (Mouse-ear cress) protein is F-box/kelch-repeat protein At1g16250.